The following is a 25-amino-acid chain: Ranatuerin-1 (25 aa).

A disulfide bridge connects residues Cys-19 and Cys-25.

Belongs to the frog skin active peptide (FSAP) family. Ranatuerin subfamily. Expressed by the skin glands.

The protein resides in the secreted. Its function is as follows. Antibacterial activity against Gram-positive bacterium S.aureus (MIC=50 uM) and Gram-negative bacterium E.coli (MIC=2 uM). Has activity against C.albicans (MIC=70 uM). Shows no detectable hemolytic activity towards human erythrocytes. The polypeptide is Ranatuerin-1 (Aquarana catesbeiana (American bullfrog)).